Here is a 291-residue protein sequence, read N- to C-terminus: 3-methyl-2-oxobutanoate hydroxymethyltransferase (291 aa).

Positions 1-10 (MTQLSAAQTP) are enriched in polar residues. The disordered stretch occupies residues 1-20 (MTQLSAAQTPQPKPADGNRA). Asp71 and Asp110 together coordinate Mg(2+). Residues 71-72 (DS), Asp110, and Lys140 each bind 3-methyl-2-oxobutanoate. Glu142 lines the Mg(2+) pocket. Glu208 functions as the Proton acceptor in the catalytic mechanism.

This sequence belongs to the PanB family. In terms of assembly, homodecamer; pentamer of dimers. It depends on Mg(2+) as a cofactor.

It is found in the cytoplasm. The catalysed reaction is 3-methyl-2-oxobutanoate + (6R)-5,10-methylene-5,6,7,8-tetrahydrofolate + H2O = 2-dehydropantoate + (6S)-5,6,7,8-tetrahydrofolate. Its pathway is cofactor biosynthesis; (R)-pantothenate biosynthesis; (R)-pantoate from 3-methyl-2-oxobutanoate: step 1/2. Functionally, catalyzes the reversible reaction in which hydroxymethyl group from 5,10-methylenetetrahydrofolate is transferred onto alpha-ketoisovalerate to form ketopantoate. The sequence is that of 3-methyl-2-oxobutanoate hydroxymethyltransferase from Streptomyces coelicolor (strain ATCC BAA-471 / A3(2) / M145).